We begin with the raw amino-acid sequence, 128 residues long: Ribonuclease pancreatic (128 aa).

Positions 1–15 are enriched in basic and acidic residues; it reads SESSAKKFERQHMDS. A disordered region spans residues 1–28; sequence SESSAKKFERQHMDSRGSPSTNPNYCNE. Substrate contacts are provided by Lys7 and Arg10. The active-site Proton acceptor is the His12. Intrachain disulfides connect Cys26–Cys84, Cys40–Cys95, Cys58–Cys110, and Cys65–Cys72. The N-linked (GlcNAc...) asparagine glycan is linked to Asn34. Substrate contacts are provided by residues 41 to 45, Lys66, and Arg85; that span reads KPVNT. His119 serves as the catalytic Proton donor.

It belongs to the pancreatic ribonuclease family. Monomer. Interacts with and forms tight 1:1 complexes with RNH1. Dimerization of two such complexes may occur. Interaction with RNH1 inhibits this protein. Pancreas.

It is found in the secreted. It catalyses the reaction an [RNA] containing cytidine + H2O = an [RNA]-3'-cytidine-3'-phosphate + a 5'-hydroxy-ribonucleotide-3'-[RNA].. The catalysed reaction is an [RNA] containing uridine + H2O = an [RNA]-3'-uridine-3'-phosphate + a 5'-hydroxy-ribonucleotide-3'-[RNA].. Its function is as follows. Endonuclease that catalyzes the cleavage of RNA on the 3' side of pyrimidine nucleotides. Acts on single-stranded and double-stranded RNA. The chain is Ribonuclease pancreatic (RNASE1) from Myocastor coypus (Coypu).